The sequence spans 264 residues: Movement protein (264 aa).

The segment at 219-264 (PSYRSRSQSVGGRGKRHSKPPNRRLDSASEESSSVSFEDGLQSDHT) is disordered. Basic residues predominate over residues 231–240 (RGKRHSKPPN).

It belongs to the tobamovirus movement protein family.

It localises to the host cytoplasm. Its subcellular location is the host cytoskeleton. It is found in the host cell junction. The protein localises to the host plasmodesma. Functionally, transports viral genome to neighboring plant cells directly through plasmosdesmata, without any budding. The movement protein allows efficient cell to cell propagation, by bypassing the host cell wall barrier. Forms a ribonucleoprotein complex with viral RNA. Binds microtubules and modulates microtubule stability. Can bind double-stranded DNA. The protein is Movement protein (MP) of Cucumber green mottle mosaic virus (strain watermelon SH) (CGMMV).